Here is a 550-residue protein sequence, read N- to C-terminus: (S)-beta-bisabolene synthase (550 aa).

Residues aspartate 303, aspartate 307, serine 451, and glutamate 455 each coordinate Mg(2+). A DDXXD motif motif is present at residues 303–307; sequence DDTYD.

This sequence belongs to the terpene synthase family. Tpsa subfamily. It depends on Mg(2+) as a cofactor. Mn(2+) serves as cofactor. Expressed only in young rhizomes. Not detected in leaves, roots and mature rhizomes.

The catalysed reaction is (2E,6E)-farnesyl diphosphate = (S)-beta-bisabolene + diphosphate. Functionally, sesquiterpene synthase involved in the biosynthesis of bisabolene. In Zingiber officinale (Ginger), this protein is (S)-beta-bisabolene synthase (TPS1).